A 354-amino-acid polypeptide reads, in one-letter code: UDP-N-acetylglucosamine--N-acetylmuramyl-(pentapeptide) pyrophosphoryl-undecaprenol N-acetylglucosamine transferase (354 aa).

UDP-N-acetyl-alpha-D-glucosamine-binding positions include 12–14 (TGG), Asn-124, Arg-163, Ser-187, Ile-240, and Gln-285.

Belongs to the glycosyltransferase 28 family. MurG subfamily.

It localises to the cell inner membrane. The catalysed reaction is di-trans,octa-cis-undecaprenyl diphospho-N-acetyl-alpha-D-muramoyl-L-alanyl-D-glutamyl-meso-2,6-diaminopimeloyl-D-alanyl-D-alanine + UDP-N-acetyl-alpha-D-glucosamine = di-trans,octa-cis-undecaprenyl diphospho-[N-acetyl-alpha-D-glucosaminyl-(1-&gt;4)]-N-acetyl-alpha-D-muramoyl-L-alanyl-D-glutamyl-meso-2,6-diaminopimeloyl-D-alanyl-D-alanine + UDP + H(+). The protein operates within cell wall biogenesis; peptidoglycan biosynthesis. Functionally, cell wall formation. Catalyzes the transfer of a GlcNAc subunit on undecaprenyl-pyrophosphoryl-MurNAc-pentapeptide (lipid intermediate I) to form undecaprenyl-pyrophosphoryl-MurNAc-(pentapeptide)GlcNAc (lipid intermediate II). The polypeptide is UDP-N-acetylglucosamine--N-acetylmuramyl-(pentapeptide) pyrophosphoryl-undecaprenol N-acetylglucosamine transferase (Methylococcus capsulatus (strain ATCC 33009 / NCIMB 11132 / Bath)).